A 371-amino-acid chain; its full sequence is AA9 family lytic polysaccharide monooxygenase B (371 aa).

The signal sequence occupies residues 1-25; sequence MSIAKIAGVVLGSAALVAGHGYVSG. Positions 20 and 104 each coordinate Cu(2+). 2 disulfides stabilise this stretch: cysteine 74-cysteine 194 and cysteine 115-cysteine 119. Asparagine 154 carries an N-linked (GlcNAc...) asparagine glycan. The O2 site is built by histidine 180 and glutamine 189. Residue tyrosine 191 participates in Cu(2+) binding. Positions 304–332 are disordered; sequence HVQATSSSAAASTPTASSGASSGSGSSSS. A compositionally biased stretch (low complexity) spans 307-332; sequence ATSSSAAASTPTASSGASSGSGSSSS.

It belongs to the polysaccharide monooxygenase AA9 family. Cu(2+) is required as a cofactor.

It is found in the secreted. It carries out the reaction [(1-&gt;4)-beta-D-glucosyl]n+m + reduced acceptor + O2 = 4-dehydro-beta-D-glucosyl-[(1-&gt;4)-beta-D-glucosyl]n-1 + [(1-&gt;4)-beta-D-glucosyl]m + acceptor + H2O.. Its function is as follows. Lytic polysaccharide monooxygenase (LPMO) that depolymerizes crystalline and amorphous polysaccharides via the oxidation of scissile alpha- or beta-(1-4)-glycosidic bonds, yielding C1 and C4 oxidation products. Catalysis by LPMOs requires the reduction of the active-site copper from Cu(II) to Cu(I) by a reducing agent and H(2)O(2) or O(2) as a cosubstrate. In addition to cellulose, also cleaves the beta-(1!4)-glucan backbone of tamarind xyloglucan, irrespective of substitutions which contrasts with AA9A xyloglucan cleavage activity. This chain is AA9 family lytic polysaccharide monooxygenase B, found in Aspergillus tamarii.